A 238-amino-acid chain; its full sequence is Tetraspanin-8 (238 aa).

At 1 to 9 (MAGVNVCIK) the chain is on the cytoplasmic side. A helical transmembrane segment spans residues 10–33 (CSMFIFNFVFWLCGAIILSVAISI). Over 34-57 (RAGKIGQEILAPGDADLNLFIAVN) the chain is Extracellular. Residues 58–72 (ILIFVGAVIMILGFL) traverse the membrane as a helical segment. The Cytoplasmic segment spans residues 73–83 (GCCGAMKENQF). Residues 84 to 109 (MMILFFVGLLMILLLQVAAGIVATTR) form a helical membrane-spanning segment. The Extracellular segment spans residues 110-206 (KSKTEQALNK…ASISQMFSKR (97 aa)). Residue N118 is glycosylated (N-linked (GlcNAc...) asparagine). Residues 207-231 (LFIVLALAFGLAAIEVLGLIFSIVL) traverse the membrane as a helical segment. Topologically, residues 232-238 (YCQMRKK) are cytoplasmic.

This sequence belongs to the tetraspanin (TM4SF) family. As to quaternary structure, forms homooligomers. Interacts with MEP1B. Interacts with integrin alpha3/ITGA3. Interacts with RICTOR and MTOR. Interacts with ADAM17. Interacts with ECE1.

The protein localises to the cell membrane. Its function is as follows. Structural component of specialized membrane microdomains known as tetraspanin-enriched microdomains (TERMs), which act as platforms for receptor clustering and signaling. Participates thereby in diverse biological functions such as cell signal transduction, migration and protein trafficking. Promotes ADAM17-mediated TNF-alpha processing through recruitment of ADAM17 to tetraspanin-enriched micro-domains (TEMs). Forms a complex with RICTOR and integrin alpha3/ITGA3 to mediate mTORC2 activation and AKT1 phosphorylation leading to cell migration. Reduces apoptosis and autophagy induced by high glucose levels through forming a complex with mTOR and RICTOR. Contributes to the maintenance of intestinal epithelial barrier and plays a role in the regulation of intestine inflammation by switching interferon gamma receptor 1/IFNGR1 from clathrin-dependent to lipid raft-dependent endocytosis route to limit STAT1 activation magnitude and duration. Acts as a modulator of the endothelin axis by associating with endothelin converting enzyme ECE1 and regulating its activity of conversion of the endothelin-1 precursor to endothelin. This is Tetraspanin-8 (TSPAN8) from Bos taurus (Bovine).